The primary structure comprises 315 residues: Eukaryotic translation initiation factor 2 subunit 1 (315 aa).

Positions 17-88 (EDVVMVNVRS…EKGYIDLSKR (72 aa)) constitute an S1 motif domain. S49 and S52 each carry phosphoserine. A disordered region spans residues 292 to 315 (RLERENAEVDGDDDAEEMEAKTED). Residues 299–308 (EVDGDDDAEE) show a composition bias toward acidic residues.

Belongs to the eIF-2-alpha family. In terms of assembly, eukaryotic translation initiation factor 2 eIF2 is a heterotrimeric complex composed of an alpha (EIF2S1), a beta (EIF2S2) and a gamma (EIF2S3) chain. Phosphorylation at Ser-49 and Ser-52 stabilizes the eIF-2/GDP/eIF2B complex and prevents GDP/GTP exchange reaction, thus impairing the recycling of eIF-2 between successive rounds of initiation and leading to global inhibition of translation, while concomitantly initiating the preferential translation of integrated stress response (ISR)-specific mRNAs.

The protein localises to the cytoplasm. It localises to the stress granule. The protein resides in the cytosol. Its activity is regulated as follows. Activity is regulated by phosphorylation at Ser-49 and Ser-52, which stabilizes the eIF2/GDP/eIF2B complex and prevents the eIF2B-mediated exchange of GDP for GTP, thereby preventing the formation of the 43S pre-initiation complex (43S PIC). This results in the global attenuation of 5' cap-dependent protein synthesis and concomitant translation of ISR-specific mRNAs that contain a short upstream open reading frame (uORF) in their 5' UTR. Its function is as follows. Member of the eIF2 complex that functions in the early steps of protein synthesis by forming a ternary complex with GTP and initiator tRNA. This complex binds to a 40S ribosomal subunit, followed by mRNA binding to form a 43S pre-initiation complex. Junction of the 60S ribosomal subunit to form the 80S initiation complex is preceded by hydrolysis of the GTP bound to eIF2 and release of an eIF2-GDP binary complex. In order for eIF2 to recycle and catalyze another round of initiation, the GDP bound to eIF2 must exchange with GTP by way of a reaction catalyzed by eIF2B. EIF2S1/eIF2-alpha is a key component of the integrated stress response (ISR), required for adaptation to various stress: phosphorylation by metabolic-stress sensing protein kinases (EIF2AK1/HRI, EIF2AK2/PKR, EIF2AK3/PERK and EIF2AK4/GCN2) in response to stress converts EIF2S1/eIF2-alpha in a global protein synthesis inhibitor, leading to a attenuation of cap-dependent translation, while concomitantly initiating the preferential translation of ISR-specific mRNAs, such as the transcriptional activators ATF4 and QRICH1. The polypeptide is Eukaryotic translation initiation factor 2 subunit 1 (EIF2S1) (Gallus gallus (Chicken)).